Consider the following 567-residue polypeptide: Eukaryotic translation initiation factor 3 subunit D (567 aa).

2 disordered regions span residues 12-34 (PVKSAWGPPETEQIGGDIPYAPF) and 122-160 (GQNVQRGGRGGRYGSSGGRGAGDTVVSRSSGAGGARGRR). Over residues 128–142 (GGRGGRYGSSGGRGA) the composition is skewed to gly residues. The segment at 300–314 (PFDYLTVNENAYDSP) is RNA gate.

This sequence belongs to the eIF-3 subunit D family. As to quaternary structure, component of the eukaryotic translation initiation factor 3 (eIF-3) complex. The eIF-3 complex appears to include tif32/eif3a, SPAC25G10.08/eif3b, tif33/eif3c, SPBC4C3.07/eif3f, tif35/eif3g and sum1/eif3i. This set of common subunits may also associate exclusively with either moe1/eif3d and int6/eif3e, or with SPAC821.05/eif3h and SPAC1751.03/eif3m. The eIF-3 complex may also include SPAC3A12.13c/eif3j.

It is found in the cytoplasm. In terms of biological role, mRNA cap-binding component of the eukaryotic translation initiation factor 3 (eIF-3) complex, which is involved in protein synthesis of a specialized repertoire of mRNAs and, together with other initiation factors, stimulates binding of mRNA and methionyl-tRNAi to the 40S ribosome. The eIF-3 complex specifically targets and initiates translation of a subset of mRNAs involved in cell proliferation. In the eIF-3 complex, eif3d specifically recognizes and binds the 7-methylguanosine cap of a subset of mRNAs. The polypeptide is Eukaryotic translation initiation factor 3 subunit D (moe1) (Schizosaccharomyces pombe (strain 972 / ATCC 24843) (Fission yeast)).